A 201-amino-acid chain; its full sequence is Ras-related protein Rab-1B (201 aa).

Residue Met-1 is modified to N-acetylmethionine. Residues Ser-17, Gly-18, Val-19, Gly-20, Lys-21, Ser-22, Cys-23, Tyr-33, Thr-34, Glu-35, Ser-36, Ser-39, and Thr-40 each contribute to the GTP site. Ser-22 lines the Mg(2+) pocket. Positions 30-45 (DDTYTESYISTIGVDF) match the Switch 1 motif. Residues Thr-40 and Asp-63 each contribute to the Mg(2+) site. The interval 64 to 83 (TAGQERFRTITSSYYRGAHG) is switch 2 region; required for interaction with REP1/CHM. The Switch 2 motif lies at 65–80 (AGQERFRTITSSYYRG). Positions 66, 121, 122, 124, 151, 152, and 153 each coordinate GTP. A disordered region spans residues 174–201 (GPGAASGGERPNLKIDSTPVKPASGGCC). S-geranylgeranyl cysteine attachment occurs at residues Cys-200 and Cys-201. Cys-201 carries the post-translational modification Cysteine methyl ester.

This sequence belongs to the small GTPase superfamily. Rab family. As to quaternary structure, interacts with MICAL1 and MICAL2. Interacts (GTP-bound form) with MICALCL, MICAL1 and MILCAL3. Interacts with GDI1; the interaction requires the GDP-bound state. Interacts with CHM/REP1; the interaction requires the GDP-bound form and is necessary for prenylation by GGTase II. Interacts with RabGAP TBC1D20. Interacts (in GDP-bound form) with lipid phosphatase MTMR6 (via GRAM domain); the interaction regulates MTMR6 recruitment to the endoplasmic reticulum-Golgi intermediate compartment. Interacts (in GDP-bound form) with lipid phosphatase MTMR7. It depends on Mg(2+) as a cofactor. In terms of processing, prenylated; by GGTase II, only after interaction of the substrate with Rab escort protein 1 (REP1).

It is found in the cytoplasm. The protein resides in the membrane. It localises to the preautophagosomal structure membrane. The protein localises to the perinuclear region. The catalysed reaction is GTP + H2O = GDP + phosphate + H(+). With respect to regulation, regulated by guanine nucleotide exchange factors (GEFs) which promote the exchange of bound GDP for free GTP. Regulated by GTPase activating proteins (GAPs) including TBC1D20 which increases the GTP hydrolysis activity. Inhibited by GDP dissociation inhibitors (GDIs). The small GTPases Rab are key regulators of intracellular membrane trafficking, from the formation of transport vesicles to their fusion with membranes. Rabs cycle between an inactive GDP-bound form and an active GTP-bound form that is able to recruit to membranes different set of downstream effectors directly responsible for vesicle formation, movement, tethering and fusion. Plays a role in the initial events of the autophagic vacuole development which take place at specialized regions of the endoplasmic reticulum. Regulates vesicular transport between the endoplasmic reticulum and successive Golgi compartments. Required to modulate the compacted morphology of the Golgi. Promotes the recruitment of lipid phosphatase MTMR6 to the endoplasmic reticulum-Golgi intermediate compartment. This Mus musculus (Mouse) protein is Ras-related protein Rab-1B (Rab1b).